Reading from the N-terminus, the 1023-residue chain is 2-oxoglutarate dehydrogenase complex component E1 (1023 aa).

Residues 1–40 (MFHLRTCAAKLRPLTASQTVKTFSQNRPAAARTFQQIRCY) constitute a mitochondrion transit peptide. The residue at position 74 (lysine 74) is an N6-succinyllysine. Residue serine 100 is modified to Phosphoserine. Ca(2+) is bound by residues histidine 143, aspartate 156, and aspartate 158. Arginine 312 is a binding site for thiamine diphosphate. Position 401 is an N6-acetyllysine (lysine 401). Thiamine diphosphate is bound by residues aspartate 411, asparagine 444, and isoleucine 446. The Mg(2+) site is built by aspartate 411, asparagine 444, and isoleucine 446. A Glycyl lysine isopeptide (Lys-Gly) (interchain with G-Cter in ubiquitin) cross-link involves residue lysine 534. Lysine 564 bears the N6-succinyllysine mark. Glutamine 676 is a thiamine diphosphate binding site. Residue lysine 970 is modified to N6-acetyllysine.

The protein belongs to the alpha-ketoglutarate dehydrogenase family. Homodimer. The 2-oxoglutarate dehydrogenase complex is composed of OGDH (2-oxoglutarate dehydrogenase; E1), DLST (dihydrolipoamide succinyltransferase; E2), DLD (dihydrolipoamide dehydrogenase; E3), and the assembly factor KGD4. It contains multiple copies of the three enzymatic components (E1, E2 and E3). In the nucleus, the 2-oxoglutarate dehydrogenase complex associates with KAT2A. Interacts with ABHD11; this interaction maintains the functional lipoylation of the 2-oxoglutarate dehydrogenase complex. The cofactor is thiamine diphosphate. It depends on Mg(2+) as a cofactor.

It localises to the mitochondrion. Its subcellular location is the nucleus. The catalysed reaction is N(6)-[(R)-lipoyl]-L-lysyl-[protein] + 2-oxoglutarate + H(+) = N(6)-[(R)-S(8)-succinyldihydrolipoyl]-L-lysyl-[protein] + CO2. Calcium ions and ADP stimulate, whereas ATP and NADH reduce catalytic activity. In terms of biological role, 2-oxoglutarate dehydrogenase (E1o) component of the 2-oxoglutarate dehydrogenase complex (OGDHC). Participates in the first step, rate limiting for the overall conversion of 2-oxoglutarate to succinyl-CoA and CO(2) catalyzed by the whole OGDHC. Catalyzes the irreversible decarboxylation of 2-oxoglutarate (alpha-ketoglutarate) via the thiamine diphosphate (ThDP) cofactor and subsequent transfer of the decarboxylated acyl intermediate on an oxidized dihydrolipoyl group that is covalently amidated to the E2 enzyme (dihydrolipoyllysine-residue succinyltransferase or DLST). Plays a key role in the Krebs (citric acid) cycle, which is a common pathway for oxidation of fuel molecules, including carbohydrates, fatty acids, and amino acids. Can catalyze the decarboxylation of 2-oxoadipate in vitro, but at a much lower rate than 2-oxoglutarate. Mainly active in the mitochondrion. A fraction of the 2-oxoglutarate dehydrogenase complex also localizes in the nucleus and is required for lysine succinylation of histones: associates with KAT2A on chromatin and provides succinyl-CoA to histone succinyltransferase KAT2A. The protein is 2-oxoglutarate dehydrogenase complex component E1 of Homo sapiens (Human).